The primary structure comprises 612 residues: Alpha-glycerophosphate oxidase (612 aa).

Asp-21 to Glu-49 is an FAD binding site. The segment covering Val-398–Asp-408 has biased composition (basic and acidic residues). Residues Val-398 to Phe-418 are disordered.

The protein belongs to the FAD-dependent glycerol-3-phosphate dehydrogenase family. It depends on FAD as a cofactor.

The protein resides in the cytoplasm. It carries out the reaction sn-glycerol 3-phosphate + O2 = dihydroxyacetone phosphate + H2O2. The polypeptide is Alpha-glycerophosphate oxidase (glpO) (Streptococcus pyogenes serotype M18 (strain MGAS8232)).